Here is a 179-residue protein sequence, read N- to C-terminus: Transcription factor 21 (179 aa).

The disordered stretch occupies residues 19–88 (DCDSLKVDSN…VQRNAANARE (70 aa)). Polar residues-rich tracts occupy residues 30–49 (EFGT…NGSP) and 70–80 (SGVSQEGKQVQ). Residues 79–131 (VQRNAANARERARMRVLSKAFSRLKTTLPWVPPDTKLSKLDTLRLASSYIAHL) form the bHLH domain.

Efficient DNA binding requires dimerization with another bHLH protein. Forms a heterodimer with TCF3 and binds the E box (5'-CANNTG-3'). Expressed at high levels in lung, kidney, gut, heart, ovary and podocytes (visceral glomerular epithelial cells). Also found in spleen, large intestine, uterus, bladder and testis.

The protein resides in the nucleus. In terms of biological role, involved in epithelial-mesenchymal interactions in kidney and lung morphogenesis that include epithelial differentiation and branching morphogenesis. May be involved in the organogenesis of the spleen and heart and in cardiac and coronary artery development. May function in the development and sex differentiation of gonad via transcriptional regulation of AD4BP/SF-1. This Mus musculus (Mouse) protein is Transcription factor 21 (Tcf21).